A 428-amino-acid chain; its full sequence is Ectoine/5-hydroxyectoine TRAP transporter large permease protein UehC (428 aa).

12 consecutive transmembrane segments (helical) span residues 9 to 29, 49 to 69, 99 to 119, 139 to 159, 172 to 192, 217 to 237, 242 to 262, 273 to 293, 302 to 322, 324 to 344, 366 to 386, and 400 to 420; these read MIVLLLLGFPMMIPLIAGAFI, LAGIRPASLIAVPMFIFAADI, AAACTMFGAVSGSTQATVVAI, ALIVNASDIAFLIPPSIGMII, FIAGIGPGLLILVLFSAYAYI, ALWPMGFPVIIIGGIYGGVFS, AAACVLYALVLEVLVFRSMSL, GLITAIVFILVGAGAAFSWVI, ILGAIGIAEMGPIGVLFVISI, FFIGCMFVDPIVVILVLVPVF, VAIGSATPPFGCDIFTAIAVF, and FILMLLGVSVALIFFPQIALF.

Belongs to the TRAP transporter large permease family. As to quaternary structure, the complex comprises the extracytoplasmic solute receptor protein UehA, and the two transmembrane proteins UehB and UehC.

It is found in the cell inner membrane. Its function is as follows. Part of the tripartite ATP-independent periplasmic (TRAP) transport system UehABC, which imports both ectoine and 5-hydroxyectoine as nutrients, and not as osmoprotectants. The sequence is that of Ectoine/5-hydroxyectoine TRAP transporter large permease protein UehC from Ruegeria pomeroyi (strain ATCC 700808 / DSM 15171 / DSS-3) (Silicibacter pomeroyi).